The following is a 264-amino-acid chain: Major prion protein (264 aa).

Residues 1-24 (MVKRHIGSWILVLFVVMWSDVGLC) form the signal peptide. An interaction with GRB2, ERI3 and SYN1 region spans residues 25–241 (KKRPKPGGGW…ESQAYYQRGA (217 aa)). Residues 27–119 (RPKPGGGWNT…WNKPSKPKTN (93 aa)) form a disordered region. Tandem repeats lie at residues 54–62 (SQGGGGWGQ), 63–70 (PHGGGWGQ), 71–78 (PHGGGWGQ), 79–86 (PHGGGWGQ), 87–94 (PHGGGWGQ), and 95–103 (PHGGGGWGQ). Residues 54–103 (SQGGGGWGQPHGGGWGQPHGGGWGQPHGGGWGQPHGGGWGQPHGGGGWGQ) are 6 X 8 AA tandem repeats of P-H-G-G-G-W-G-Q. The span at 55–105 (QGGGGWGQPHGGGWGQPHGGGWGQPHGGGWGQPHGGGWGQPHGGGGWGQGG) shows a compositional bias: gly residues. Residues histidine 72, glycine 73, glycine 74, histidine 80, glycine 81, glycine 82, histidine 88, glycine 89, glycine 90, histidine 96, glycine 98, and glycine 99 each contribute to the Cu(2+) site. Cysteine 190 and cysteine 225 are oxidised to a cystine. Asparagine 192 and asparagine 208 each carry an N-linked (GlcNAc...) asparagine glycan. Alanine 241 carries the GPI-anchor amidated alanine lipid modification. A propeptide spans 242-264 (SVILFSSPPVILLISLLIFLIVG) (removed in mature form).

Belongs to the prion family. As to quaternary structure, monomer and homodimer. Has a tendency to aggregate into amyloid fibrils containing a cross-beta spine, formed by a steric zipper of superposed beta-strands. Soluble oligomers may represent an intermediate stage on the path to fibril formation. Copper binding may promote oligomerization. Interacts with GRB2, APP, ERI3/PRNPIP and SYN1. Mislocalized cytosolically exposed PrP interacts with MGRN1; this interaction alters MGRN1 subcellular location and causes lysosomal enlargement. Interacts with KIAA1191.

Its subcellular location is the cell membrane. It is found in the golgi apparatus. In terms of biological role, its primary physiological function is unclear. Has cytoprotective activity against internal or environmental stresses. May play a role in neuronal development and synaptic plasticity. May be required for neuronal myelin sheath maintenance. May play a role in iron uptake and iron homeostasis. Soluble oligomers are toxic to cultured neuroblastoma cells and induce apoptosis (in vitro). Association with GPC1 (via its heparan sulfate chains) targets PRNP to lipid rafts. Also provides Cu(2+) or Zn(2+) for the ascorbate-mediated GPC1 deaminase degradation of its heparan sulfate side chains. The polypeptide is Major prion protein (PRNP) (Bubalus bubalis (Domestic water buffalo)).